Consider the following 279-residue polypeptide: Diaminopimelate epimerase (279 aa).

Residues Asn12, Gln45, and Asn65 each coordinate substrate. The Proton donor role is filled by Cys74. Substrate is bound by residues 75–76 (GN), Asn162, Asn195, and 213–214 (ER). Cys222 serves as the catalytic Proton acceptor. 223–224 (GT) serves as a coordination point for substrate.

The protein belongs to the diaminopimelate epimerase family. Homodimer.

The protein localises to the cytoplasm. It catalyses the reaction (2S,6S)-2,6-diaminopimelate = meso-2,6-diaminopimelate. It functions in the pathway amino-acid biosynthesis; L-lysine biosynthesis via DAP pathway; DL-2,6-diaminopimelate from LL-2,6-diaminopimelate: step 1/1. In terms of biological role, catalyzes the stereoinversion of LL-2,6-diaminopimelate (L,L-DAP) to meso-diaminopimelate (meso-DAP), a precursor of L-lysine and an essential component of the bacterial peptidoglycan. In Shewanella woodyi (strain ATCC 51908 / MS32), this protein is Diaminopimelate epimerase.